The primary structure comprises 724 residues: Degenerin mec-10 (724 aa).

Residues 1 to 15 show a composition bias toward polar residues; that stretch reads MNRNPRMSKFQPNPR. Positions 1-22 are disordered; the sequence is MNRNPRMSKFQPNPRSRSRFQD. Residues 1 to 122 are Cytoplasmic-facing; sequence MNRNPRMSKF…GQAPNSLYRA (122 aa). The helical transmembrane segment at 123–143 threads the bilayer; the sequence is AWVFLLLICAIQFINQAVAVI. The Extracellular portion of the chain corresponds to 144 to 684; sequence QKYQKMDKIT…FGGHLGLWSG (541 aa). Positions 229 to 265 are disordered; the sequence is KRGAGEKGTFEPANSACECDEEDGSNECEERSTEKPS. Residues 246–255 show a composition bias toward acidic residues; the sequence is ECDEEDGSNE. The span at 256-265 shows a compositional bias: basic and acidic residues; sequence CEERSTEKPS. Asn293, Asn369, Asn463, Asn605, and Asn624 each carry an N-linked (GlcNAc...) asparagine glycan. The helical transmembrane segment at 685 to 705 threads the bilayer; that stretch reads VSVMTCCEFVCLAFELIYMAI. Residues 706–724 are Cytoplasmic-facing; sequence AHHINQQRIRRRENAANEY.

The protein belongs to the amiloride-sensitive sodium channel (TC 1.A.6) family. As to quaternary structure, component of a non-voltage-gated amiloride-sensitive cation channel complex (also called the degenerin channel complex) composed of at least the mec-2, mec-4, mec-6 and mec-10 subunits; the complex mediates mechanotransduction in touch cells. Interacts with mec-4 and mec-6.

The protein localises to the cell membrane. Its function is as follows. Subunit of an amiloride-sensitive cation channel (degenerin channel complex) permeable for sodium, potassium, lithium and N-methylglucamine, and required for mechanosensory transduction (touch sensitivity). Negatively regulates the turning step of male mating behavior. This is Degenerin mec-10 from Caenorhabditis elegans.